A 673-amino-acid chain; its full sequence is Polygalacturonate 4-alpha-galacturonosyltransferase (673 aa).

At 1–22 the chain is on the cytoplasmic side; it reads MALKRGLSGVNRIRGSGGGSRS. Residues 23-43 form a helical; Signal-anchor for type II membrane protein membrane-spanning segment; sequence VLVLLIFFCVFAPLCFFVGRG. Topologically, residues 44–673 are lumenal; sequence VYIDSSNDYS…PYLRRCNLHE (630 aa). N-linked (GlcNAc...) asparagine glycosylation occurs at N103. Positions 112-136 are disordered; it reads GVDPSFRHSENPATPDVKSNNLNEK. N-linked (GlcNAc...) asparagine glycans are attached at residues N382, N434, N538, and N585.

It belongs to the glycosyltransferase 8 family. Expressed in seedlings, inflorescences, flowers, siliques, pollen, roots, stems and leaves.

Its subcellular location is the golgi apparatus membrane. The enzyme catalyses [(1-&gt;4)-alpha-D-galacturonosyl](n) + UDP-alpha-D-galacturonate = [(1-&gt;4)-alpha-D-galacturonosyl](n+1) + UDP + H(+). It functions in the pathway glycan metabolism; pectin biosynthesis. Its function is as follows. Involved in pectin biosynthesis. Catalyzes the transfer of galacturonic acid from uridine 5'-diphosphogalacturonic acid onto the pectic polysaccharide homogalacturonan. This chain is Polygalacturonate 4-alpha-galacturonosyltransferase (GAUT1), found in Arabidopsis thaliana (Mouse-ear cress).